We begin with the raw amino-acid sequence, 297 residues long: 3-mercaptopyruvate sulfurtransferase (297 aa).

An N-acetylalanine modification is found at Ala2. The Rhodanese 1 domain occupies 25-144 (ASQPLKLLDA…WLSQNLPISS (120 aa)). A Phosphoserine modification is found at Ser35. Lys40 carries the N6-acetyllysine; alternate modification. Lys40 is modified (N6-succinyllysine; alternate). A hinge region spans residues 145 to 160 (GKSPSEPAEFCAQLDP). N6-succinyllysine occurs at positions 146 and 164. Positions 174 to 288 (DARRFQVVDA…WYMRAQPEHV (115 aa)) constitute a Rhodanese 2 domain. Residue Arg188 participates in substrate binding. Cys248 (cysteine persulfide intermediate) is an active-site residue.

Monomer (active form). Homodimer; disulfide-linked (inactive form). Post-translationally, the N-terminus is blocked. As to expression, expressed in liver, heart, kidney and brain. Localizes to tubular epithelium in the kidney, pericentral hepatocytes in the liver, cardiac cells in the heart and neuroglial cells in the brain. Also expressed in vascular endothelium of the thoracic aorta. Weak expression in lung and thymus.

The protein resides in the cytoplasm. It localises to the mitochondrion. Its subcellular location is the synapse. The protein localises to the synaptosome. It catalyses the reaction 2-oxo-3-sulfanylpropanoate + [thioredoxin]-dithiol = [thioredoxin]-disulfide + hydrogen sulfide + pyruvate + H(+). By oxidative stress, and thioredoxin. Under oxidative stress conditions, the catalytic cysteine site is converted to a sulfenate which inhibits the MPST enzyme activity. Reduced thioredoxin cleaves an intersubunit disulfide bond to turn on the redox switch and reactivate the enzyme. Inhibited by different oxidants, hydrogen peroxide and tetrathionate. Functionally, transfer of a sulfur ion to cyanide or to other thiol compounds. Also has weak rhodanese activity. Detoxifies cyanide and is required for thiosulfate biosynthesis. Acts as an antioxidant. In combination with cysteine aminotransferase (CAT), contributes to the catabolism of cysteine and is an important producer of hydrogen sulfide in the brain, retina and vascular endothelial cells. Hydrogen sulfide H(2)S is an important synaptic modulator, signaling molecule, smooth muscle contractor and neuroprotectant. Its production by the 3MST/CAT pathway is regulated by calcium ions. This Rattus norvegicus (Rat) protein is 3-mercaptopyruvate sulfurtransferase (Mpst).